The primary structure comprises 396 residues: 1-deoxy-D-xylulose 5-phosphate reductoisomerase (396 aa).

Thr17, Gly18, Ser19, Ile20, Asn47, and Asn130 together coordinate NADPH. A 1-deoxy-D-xylulose 5-phosphate-binding site is contributed by Lys131. Residue Glu132 participates in NADPH binding. Residue Asp156 coordinates Mn(2+). 4 residues coordinate 1-deoxy-D-xylulose 5-phosphate: Ser157, Glu158, Ser182, and His205. Glu158 provides a ligand contact to Mn(2+). Gly211 is an NADPH binding site. Residues Ser218, Asn223, Lys224, and Glu227 each coordinate 1-deoxy-D-xylulose 5-phosphate. Mn(2+) is bound at residue Glu227.

Belongs to the DXR family. Mg(2+) serves as cofactor. Mn(2+) is required as a cofactor.

The catalysed reaction is 2-C-methyl-D-erythritol 4-phosphate + NADP(+) = 1-deoxy-D-xylulose 5-phosphate + NADPH + H(+). It participates in isoprenoid biosynthesis; isopentenyl diphosphate biosynthesis via DXP pathway; isopentenyl diphosphate from 1-deoxy-D-xylulose 5-phosphate: step 1/6. Functionally, catalyzes the NADPH-dependent rearrangement and reduction of 1-deoxy-D-xylulose-5-phosphate (DXP) to 2-C-methyl-D-erythritol 4-phosphate (MEP). The protein is 1-deoxy-D-xylulose 5-phosphate reductoisomerase of Rhizobium etli (strain CIAT 652).